Reading from the N-terminus, the 235-residue chain is Ubiquinone biosynthesis O-methyltransferase (235 aa).

S-adenosyl-L-methionine-binding residues include Arg-39, Gly-59, Asp-80, and Met-124.

This sequence belongs to the methyltransferase superfamily. UbiG/COQ3 family.

It catalyses the reaction a 3-demethylubiquinol + S-adenosyl-L-methionine = a ubiquinol + S-adenosyl-L-homocysteine + H(+). It carries out the reaction a 3-(all-trans-polyprenyl)benzene-1,2-diol + S-adenosyl-L-methionine = a 2-methoxy-6-(all-trans-polyprenyl)phenol + S-adenosyl-L-homocysteine + H(+). It participates in cofactor biosynthesis; ubiquinone biosynthesis. In terms of biological role, O-methyltransferase that catalyzes the 2 O-methylation steps in the ubiquinone biosynthetic pathway. This Photobacterium profundum (strain SS9) protein is Ubiquinone biosynthesis O-methyltransferase.